The primary structure comprises 231 residues: 5'-methylthioadenosine/S-adenosylhomocysteine nucleosidase (231 aa).

The Proton acceptor role is filled by Glu-12. Substrate contacts are provided by residues Gly-78, Met-153, and 174 to 175 (ME). The active-site Proton donor is the Asp-198.

Belongs to the PNP/UDP phosphorylase family. MtnN subfamily.

The catalysed reaction is S-adenosyl-L-homocysteine + H2O = S-(5-deoxy-D-ribos-5-yl)-L-homocysteine + adenine. It carries out the reaction S-methyl-5'-thioadenosine + H2O = 5-(methylsulfanyl)-D-ribose + adenine. The enzyme catalyses 5'-deoxyadenosine + H2O = 5-deoxy-D-ribose + adenine. Its pathway is amino-acid biosynthesis; L-methionine biosynthesis via salvage pathway; S-methyl-5-thio-alpha-D-ribose 1-phosphate from S-methyl-5'-thioadenosine (hydrolase route): step 1/2. In terms of biological role, catalyzes the irreversible cleavage of the glycosidic bond in both 5'-methylthioadenosine (MTA) and S-adenosylhomocysteine (SAH/AdoHcy) to adenine and the corresponding thioribose, 5'-methylthioribose and S-ribosylhomocysteine, respectively. Also cleaves 5'-deoxyadenosine, a toxic by-product of radical S-adenosylmethionine (SAM) enzymes, into 5-deoxyribose and adenine. The polypeptide is 5'-methylthioadenosine/S-adenosylhomocysteine nucleosidase (Bacillus subtilis (strain 168)).